Reading from the N-terminus, the 69-residue chain is Guanine nucleotide-binding protein G(I)/G(S)/G(O) subunit gamma-T2 (69 aa).

Position 66 is a cysteine methyl ester (Cys66). Cys66 carries S-farnesyl cysteine lipidation. A propeptide spans Val67 to Ser69 (removed in mature form).

Belongs to the G protein gamma family. As to quaternary structure, g proteins are composed of 3 units, alpha, beta and gamma.

It localises to the cell membrane. In terms of biological role, guanine nucleotide-binding proteins (G proteins) are involved as a modulator or transducer in various transmembrane signaling systems. The beta and gamma chains are required for the GTPase activity, for replacement of GDP by GTP, and for G protein-effector interaction. The sequence is that of Guanine nucleotide-binding protein G(I)/G(S)/G(O) subunit gamma-T2 (Gngt2) from Mus musculus (Mouse).